Reading from the N-terminus, the 347-residue chain is DNA-directed RNA polymerase subunit alpha (347 aa).

The interval 1 to 226 is alpha N-terminal domain (alpha-NTD); it reads MLISQRPTLS…ELFGLARELN (226 aa). The tract at residues 241 to 347 is alpha C-terminal domain (alpha-CTD); the sequence is ADHIASFALP…DQDYAETEQL (107 aa).

It belongs to the RNA polymerase alpha chain family. In terms of assembly, homodimer. The RNAP catalytic core consists of 2 alpha, 1 beta, 1 beta' and 1 omega subunit. When a sigma factor is associated with the core the holoenzyme is formed, which can initiate transcription.

The enzyme catalyses RNA(n) + a ribonucleoside 5'-triphosphate = RNA(n+1) + diphosphate. In terms of biological role, DNA-dependent RNA polymerase catalyzes the transcription of DNA into RNA using the four ribonucleoside triphosphates as substrates. This chain is DNA-directed RNA polymerase subunit alpha, found in Mycobacterium avium (strain 104).